Consider the following 130-residue polypeptide: Small ribosomal subunit protein uS8 (130 aa).

It belongs to the universal ribosomal protein uS8 family. In terms of assembly, part of the 30S ribosomal subunit. Contacts proteins S5 and S12.

One of the primary rRNA binding proteins, it binds directly to 16S rRNA central domain where it helps coordinate assembly of the platform of the 30S subunit. The polypeptide is Small ribosomal subunit protein uS8 (Alcanivorax borkumensis (strain ATCC 700651 / DSM 11573 / NCIMB 13689 / SK2)).